A 181-amino-acid chain; its full sequence is Protein Syd (181 aa).

Belongs to the Syd family.

It localises to the cell inner membrane. In terms of biological role, interacts with the SecY protein in vivo. May bind preferentially to an uncomplexed state of SecY, thus functioning either as a chelating agent for excess SecY in the cell or as a regulatory factor that negatively controls the translocase function. This is Protein Syd from Shigella flexneri serotype 5b (strain 8401).